The sequence spans 245 residues: Orotidine 5'-phosphate decarboxylase (245 aa).

Substrate is bound by residues Asp-22, Lys-44, 71-80 (DLKFHDIPNT), Thr-131, Arg-192, Gln-201, Gly-221, and Arg-222. The active-site Proton donor is Lys-73.

It belongs to the OMP decarboxylase family. Type 1 subfamily. In terms of assembly, homodimer.

The enzyme catalyses orotidine 5'-phosphate + H(+) = UMP + CO2. It functions in the pathway pyrimidine metabolism; UMP biosynthesis via de novo pathway; UMP from orotate: step 2/2. Catalyzes the decarboxylation of orotidine 5'-monophosphate (OMP) to uridine 5'-monophosphate (UMP). The sequence is that of Orotidine 5'-phosphate decarboxylase from Escherichia coli O127:H6 (strain E2348/69 / EPEC).